Reading from the N-terminus, the 825-residue chain is AP-3 complex subunit delta (825 aa).

10 HEAT repeats span residues 131–168 (GLAR…QYPE), 169–205 (AISA…RAPK), 207–243 (YLEF…YEPR), 244–281 (LVKK…LVGH), 285–323 (DKLA…THPS), 324–360 (LVSA…KENI), 363–400 (IVKT…KSTY), 469–513 (EKRT…LAHR), 515–547 (LLQA…LWVE), and 548–584 (KIVS…IVNT). Positions 787 to 825 (STNQGSMGDIVLETKSPIRVEKKKSKKKKKKKEKTSGKE) are disordered. The span at 807-819 (EKKKSKKKKKKKE) shows a compositional bias: basic residues.

Belongs to the adaptor complexes large subunit family. As to quaternary structure, adaptor protein complex 3 (AP-3) is a heterotetramer composed of 2 large adaptins (apl5 and apl6), a medium adaptin (apm3) and a small adaptin (aps3).

It localises to the golgi apparatus. It is found in the cytoplasmic vesicle. The protein localises to the clathrin-coated vesicle membrane. Functionally, part of the AP-3 complex, an adaptor-related complex which is not clathrin-associated. The complex is associated with the Golgi region as well as more peripheral structures. It facilitates the budding of vesicles from the Golgi membrane and may be directly involved in trafficking to the vacuole. The polypeptide is AP-3 complex subunit delta (apl5) (Schizosaccharomyces pombe (strain 972 / ATCC 24843) (Fission yeast)).